We begin with the raw amino-acid sequence, 122 residues long: Large ribosomal subunit protein bL12 (122 aa).

It belongs to the bacterial ribosomal protein bL12 family. In terms of assembly, homodimer. Part of the ribosomal stalk of the 50S ribosomal subunit. Forms a multimeric L10(L12)X complex, where L10 forms an elongated spine to which 2 to 4 L12 dimers bind in a sequential fashion. Binds GTP-bound translation factors.

In terms of biological role, forms part of the ribosomal stalk which helps the ribosome interact with GTP-bound translation factors. Is thus essential for accurate translation. In Stenotrophomonas maltophilia (strain K279a), this protein is Large ribosomal subunit protein bL12.